The sequence spans 74 residues: Conotoxin AbVIL (74 aa).

Residues 1–17 (VLIIAVLFLTACQLTTA) form the signal peptide. Residues 17–41 (AETSSRGEQKHRAPRSTDKNSRMTK) form a disordered region. Residues 18-40 (ETSSRGEQKHRAPRSTDKNSRMT) constitute a propeptide that is removed on maturation. The span at 21 to 37 (SRGEQKHRAPRSTDKNS) shows a compositional bias: basic and acidic residues. 3 disulfide bridges follow: cysteine 43–cysteine 57, cysteine 50–cysteine 61, and cysteine 56–cysteine 68.

The protein belongs to the conotoxin O1 superfamily. Expressed by the venom duct.

The protein resides in the secreted. This chain is Conotoxin AbVIL, found in Conus abbreviatus (Abbreviated cone).